Here is a 67-residue protein sequence, read N- to C-terminus: LPS-assembly lipoprotein LptM (67 aa).

The signal sequence occupies residues 1–19; the sequence is MKNVFKTLAVLLTLFSLTG. A lipid anchor (N-palmitoyl cysteine) is attached at C20. C20 carries S-diacylglycerol cysteine lipidation. Positions 26–67 are disordered; the sequence is LYFPPADKNAPPPTKKVDSQTQSTMPDKNDRATGDGPSQVNY.

This sequence belongs to the LptM family. As to quaternary structure, interacts with the outer membrane embedded portion of the LPS translocon formed by LptD and LptE (LptDE).

It localises to the cell outer membrane. In terms of biological role, component of the lipopolysaccharide (LPS) transport (Lpt) pathway that promotes efficient assembly of the outer membrane LPS translocon (LptDE) by the BAM complex. Facilitates oxidative maturation of LptD by stabilizing a conformation of the LPS translocon in which LptD can efficiently acquire native disulfide bonds, thereby activating the LPS translocon. The polypeptide is LPS-assembly lipoprotein LptM (Salmonella typhi).